Consider the following 159-residue polypeptide: Glucosamine 6-phosphate N-acetyltransferase (159 aa).

At serine 2 the chain carries N-acetylserine. D-glucosamine 6-phosphate-binding positions include threonine 28, 86–89, and 98–100; these read KIIH and EDI. One can recognise an N-acetyltransferase domain in the interval 28–159; it reads TTVGTITPES…NAGVEMQIRK (132 aa). Acetyl-CoA-binding positions include 100–102 and 108–113; these read IAV and GQGLGK. D-glucosamine 6-phosphate-binding positions include 129–130 and aspartate 134; that span reads YK. Residue 143–145 participates in acetyl-CoA binding; that stretch reads YEK. Arginine 158 is a D-glucosamine 6-phosphate binding site.

The protein belongs to the acetyltransferase family. GNA1 subfamily. In terms of assembly, homodimer.

It carries out the reaction D-glucosamine 6-phosphate + acetyl-CoA = N-acetyl-D-glucosamine 6-phosphate + CoA + H(+). It functions in the pathway nucleotide-sugar biosynthesis; UDP-N-acetyl-alpha-D-glucosamine biosynthesis; N-acetyl-alpha-D-glucosamine 1-phosphate from alpha-D-glucosamine 6-phosphate (route I): step 1/2. The sequence is that of Glucosamine 6-phosphate N-acetyltransferase (GNA1) from Saccharomyces cerevisiae (strain ATCC 204508 / S288c) (Baker's yeast).